The primary structure comprises 349 residues: ATP phosphoribosyltransferase regulatory subunit (349 aa).

The interval 327 to 349 (GRGRGVRPRRASARGGRARARPR) is disordered. The span at 330-349 (RGVRPRRASARGGRARARPR) shows a compositional bias: basic residues.

The protein belongs to the class-II aminoacyl-tRNA synthetase family. HisZ subfamily. Heteromultimer composed of HisG and HisZ subunits.

The protein localises to the cytoplasm. Its pathway is amino-acid biosynthesis; L-histidine biosynthesis; L-histidine from 5-phospho-alpha-D-ribose 1-diphosphate: step 1/9. In terms of biological role, required for the first step of histidine biosynthesis. May allow the feedback regulation of ATP phosphoribosyltransferase activity by histidine. The chain is ATP phosphoribosyltransferase regulatory subunit from Anaeromyxobacter sp. (strain K).